Reading from the N-terminus, the 639-residue chain is Lipoteichoic acid synthase 1 (639 aa).

Residues methionine 1–lysine 3 lie on the Cytoplasmic side of the membrane. A helical membrane pass occupies residues leucine 4–tyrosine 24. Residues leucine 25–glutamate 41 are Extracellular-facing. Residues isoleucine 42–alanine 62 traverse the membrane as a helical segment. Residues lysine 63 to serine 67 lie on the Cytoplasmic side of the membrane. Residues alanine 68–phenylalanine 88 form a helical membrane-spanning segment. At tyrosine 89–serine 116 the chain is on the extracellular side. The helical transmembrane segment at isoleucine 117 to isoleucine 137 threads the bilayer. Over tryptophan 138–arginine 150 the chain is Cytoplasmic. The chain crosses the membrane as a helical span at residues phenylalanine 151–glutamate 171. The Extracellular portion of the chain corresponds to lysine 172 to lysine 639. Glutamate 252 and threonine 297 together coordinate Mn(2+). Threonine 297 is an active-site residue. Residue histidine 413 coordinates substrate. Residues aspartate 472 and histidine 473 each contribute to the Mn(2+) site.

The protein belongs to the LTA synthase family. Proteolytically cleaved by the type I signal peptidases SipT and SipV.

Its subcellular location is the cell membrane. The protein resides in the secreted. It functions in the pathway cell wall biogenesis; lipoteichoic acid biosynthesis. In terms of biological role, catalyzes the polymerization of lipoteichoic acid (LTA) polyglycerol phosphate, a reaction that presumably uses phosphatidylglycerol (PG) as substrate. The chain is Lipoteichoic acid synthase 1 (ltaS1) from Bacillus subtilis (strain 168).